Reading from the N-terminus, the 118-residue chain is Iron-sulfur cluster assembly protein CyaY (118 aa).

It belongs to the frataxin family.

Involved in iron-sulfur (Fe-S) cluster assembly. May act as a regulator of Fe-S biogenesis. The sequence is that of Iron-sulfur cluster assembly protein CyaY from Buchnera aphidicola subsp. Baizongia pistaciae (strain Bp).